The chain runs to 432 residues: MQLLTIGINHHTAPVALRERVAFPLEQIKPALVTFKNVFLGPQAPNTPEAAILSTCNRTELYCATDDRAAREGAVRWLSEYHRIPVDELAPHVYALPQSEAVRHAFRVASGLDSMVLGETQILGQMKDAVRTATEAGALGTYLNQLFQRTFAVAKEVRGTTEIGTQSVSMAAAAVRLAQRIFEKVSDQRVLFIGAGEMIELCATHFAAQGPRELVVANRTAERGQRLAERFNGRAMPLADLPTRMHEFDIIVSCTASTLPIIGLGAVERAVKARRHRPIFMVDLAVPRDIEPEVGKLKDVFLYTVDDLGAIVREGNASRQAAVAQAEAIIETRVQNFMQWLDTRSVVPVIRHMHTQADALRRAEVEKAQKLLARGDDPAAVLEALSQALTNKLIHGPTSALNRVNGADRDSLIDLMRGFYQHAPRSNDQSGH.

Substrate contacts are provided by residues 55–58 (TCNR), serine 114, 119–121 (ETQ), and glutamine 125. Residue cysteine 56 is the Nucleophile of the active site. 194-199 (GAGEMI) serves as a coordination point for NADP(+).

Belongs to the glutamyl-tRNA reductase family. As to quaternary structure, homodimer.

It catalyses the reaction (S)-4-amino-5-oxopentanoate + tRNA(Glu) + NADP(+) = L-glutamyl-tRNA(Glu) + NADPH + H(+). It functions in the pathway porphyrin-containing compound metabolism; protoporphyrin-IX biosynthesis; 5-aminolevulinate from L-glutamyl-tRNA(Glu): step 1/2. Its function is as follows. Catalyzes the NADPH-dependent reduction of glutamyl-tRNA(Glu) to glutamate 1-semialdehyde (GSA). The chain is Glutamyl-tRNA reductase from Burkholderia orbicola (strain MC0-3).